Here is an 80-residue protein sequence, read N- to C-terminus: Putative membrane protein insertion efficiency factor (80 aa).

Positions 61-80 (KTGKDPVPDHFSLKRNQEGE) are disordered. The span at 62 to 80 (TGKDPVPDHFSLKRNQEGE) shows a compositional bias: basic and acidic residues.

Belongs to the UPF0161 family.

The protein localises to the cell membrane. Its function is as follows. Could be involved in insertion of integral membrane proteins into the membrane. This is Putative membrane protein insertion efficiency factor from Streptococcus pneumoniae (strain 70585).